The following is a 360-amino-acid chain: Probable dual-specificity RNA methyltransferase RlmN (360 aa).

The active-site Proton acceptor is the Glu-103. Residues 109-342 (HEYGNSVCVT…VTIRREQGHD (234 aa)) enclose the Radical SAM core domain. Cys-116 and Cys-347 are oxidised to a cystine. Residues Cys-123, Cys-127, and Cys-130 each contribute to the [4Fe-4S] cluster site. Residues 173-174 (GE), Ser-205, 228-230 (SLH), and Asn-304 contribute to the S-adenosyl-L-methionine site. Cys-347 (S-methylcysteine intermediate) is an active-site residue.

It belongs to the radical SAM superfamily. RlmN family. The cofactor is [4Fe-4S] cluster.

Its subcellular location is the cytoplasm. The enzyme catalyses adenosine(2503) in 23S rRNA + 2 reduced [2Fe-2S]-[ferredoxin] + 2 S-adenosyl-L-methionine = 2-methyladenosine(2503) in 23S rRNA + 5'-deoxyadenosine + L-methionine + 2 oxidized [2Fe-2S]-[ferredoxin] + S-adenosyl-L-homocysteine. The catalysed reaction is adenosine(37) in tRNA + 2 reduced [2Fe-2S]-[ferredoxin] + 2 S-adenosyl-L-methionine = 2-methyladenosine(37) in tRNA + 5'-deoxyadenosine + L-methionine + 2 oxidized [2Fe-2S]-[ferredoxin] + S-adenosyl-L-homocysteine. In terms of biological role, specifically methylates position 2 of adenine 2503 in 23S rRNA and position 2 of adenine 37 in tRNAs. The sequence is that of Probable dual-specificity RNA methyltransferase RlmN from Bacillus pumilus (strain SAFR-032).